The primary structure comprises 527 residues: Laccase-5 (527 aa).

The signal sequence occupies residues 1-23 (MGKFHSFVNVVALSLSLSGRVFG). The Plastocyanin-like 1 domain occupies 25–150 (IGPVTDLTIS…DGLRGPLVVY (126 aa)). N-linked (GlcNAc...) asparagine glycans are attached at residues asparagine 74 and asparagine 77. 4 residues coordinate Cu cation: histidine 87, histidine 89, histidine 132, and histidine 134. Intrachain disulfides connect cysteine 108–cysteine 516 and cysteine 140–cysteine 230. N-linked (GlcNAc...) asparagine glycans are attached at residues asparagine 156, asparagine 209, asparagine 233, asparagine 242, asparagine 276, asparagine 317, asparagine 358, asparagine 366, asparagine 393, and asparagine 402. The Plastocyanin-like 2 domain maps to 162–306 (VDDDTTVITL…GGVNSAILRY (145 aa)). A Plastocyanin-like 3 domain is found at 373-498 (TVPVLLQILS…AGFAIVFAED (126 aa)). Residues histidine 425, histidine 428, histidine 430, histidine 480, cysteine 481, histidine 482, and histidine 486 each contribute to the Cu cation site.

The protein belongs to the multicopper oxidase family. The cofactor is Cu cation.

Its subcellular location is the secreted. It carries out the reaction 4 hydroquinone + O2 = 4 benzosemiquinone + 2 H2O. Its function is as follows. Lignin degradation and detoxification of lignin-derived products. The polypeptide is Laccase-5 (LCC5) (Trametes versicolor (White-rot fungus)).